A 287-amino-acid polypeptide reads, in one-letter code: Formamidopyrimidine-DNA glycosylase (287 aa).

Residue P2 is the Schiff-base intermediate with DNA of the active site. E3 functions as the Proton donor in the catalytic mechanism. The active-site Proton donor; for beta-elimination activity is K58. DNA contacts are provided by H104, R123, and R166. The segment at 251–287 (RVYDREGEPCPTPACKGVIAREVQAGRSTFFCPVCQV) adopts an FPG-type zinc-finger fold. The Proton donor; for delta-elimination activity role is filled by R277.

This sequence belongs to the FPG family. As to quaternary structure, monomer. Zn(2+) is required as a cofactor.

The enzyme catalyses Hydrolysis of DNA containing ring-opened 7-methylguanine residues, releasing 2,6-diamino-4-hydroxy-5-(N-methyl)formamidopyrimidine.. It catalyses the reaction 2'-deoxyribonucleotide-(2'-deoxyribose 5'-phosphate)-2'-deoxyribonucleotide-DNA = a 3'-end 2'-deoxyribonucleotide-(2,3-dehydro-2,3-deoxyribose 5'-phosphate)-DNA + a 5'-end 5'-phospho-2'-deoxyribonucleoside-DNA + H(+). Functionally, involved in base excision repair of DNA damaged by oxidation or by mutagenic agents. Acts as a DNA glycosylase that recognizes and removes damaged bases. Has a preference for oxidized purines, such as 7,8-dihydro-8-oxoguanine (8-oxoG). Has AP (apurinic/apyrimidinic) lyase activity and introduces nicks in the DNA strand. Cleaves the DNA backbone by beta-delta elimination to generate a single-strand break at the site of the removed base with both 3'- and 5'-phosphates. The polypeptide is Formamidopyrimidine-DNA glycosylase (Caulobacter vibrioides (strain ATCC 19089 / CIP 103742 / CB 15) (Caulobacter crescentus)).